A 227-amino-acid polypeptide reads, in one-letter code: Cytochrome c oxidase subunit 2 (227 aa).

Topologically, residues 1–14 (MAYPFQLGLQDATS) are mitochondrial intermembrane. The chain crosses the membrane as a helical span at residues 15–45 (PIMEELMNFHDHTLMIVFLISSLVLYIISLM). The Mitochondrial matrix portion of the chain corresponds to 46–59 (LTTKLTHTSTMDAQ). Residues 60-87 (EVETIWTILPAAILILIALPSLRILYMM) traverse the membrane as a helical segment. Topologically, residues 88 to 227 (DEINNPALTV…YFENWSASMI (140 aa)) are mitochondrial intermembrane. H161, C196, E198, C200, H204, and M207 together coordinate Cu cation. E198 contributes to the Mg(2+) binding site. The residue at position 218 (Y218) is a Phosphotyrosine.

The protein belongs to the cytochrome c oxidase subunit 2 family. Component of the cytochrome c oxidase (complex IV, CIV), a multisubunit enzyme composed of 14 subunits. The complex is composed of a catalytic core of 3 subunits MT-CO1, MT-CO2 and MT-CO3, encoded in the mitochondrial DNA, and 11 supernumerary subunits COX4I, COX5A, COX5B, COX6A, COX6B, COX6C, COX7A, COX7B, COX7C, COX8 and NDUFA4, which are encoded in the nuclear genome. The complex exists as a monomer or a dimer and forms supercomplexes (SCs) in the inner mitochondrial membrane with NADH-ubiquinone oxidoreductase (complex I, CI) and ubiquinol-cytochrome c oxidoreductase (cytochrome b-c1 complex, complex III, CIII), resulting in different assemblies (supercomplex SCI(1)III(2)IV(1) and megacomplex MCI(2)III(2)IV(2)). Found in a complex with TMEM177, COA6, COX18, COX20, SCO1 and SCO2. Interacts with TMEM177 in a COX20-dependent manner. Interacts with COX20. Interacts with COX16. It depends on Cu cation as a cofactor.

Its subcellular location is the mitochondrion inner membrane. It carries out the reaction 4 Fe(II)-[cytochrome c] + O2 + 8 H(+)(in) = 4 Fe(III)-[cytochrome c] + 2 H2O + 4 H(+)(out). Component of the cytochrome c oxidase, the last enzyme in the mitochondrial electron transport chain which drives oxidative phosphorylation. The respiratory chain contains 3 multisubunit complexes succinate dehydrogenase (complex II, CII), ubiquinol-cytochrome c oxidoreductase (cytochrome b-c1 complex, complex III, CIII) and cytochrome c oxidase (complex IV, CIV), that cooperate to transfer electrons derived from NADH and succinate to molecular oxygen, creating an electrochemical gradient over the inner membrane that drives transmembrane transport and the ATP synthase. Cytochrome c oxidase is the component of the respiratory chain that catalyzes the reduction of oxygen to water. Electrons originating from reduced cytochrome c in the intermembrane space (IMS) are transferred via the dinuclear copper A center (CU(A)) of subunit 2 and heme A of subunit 1 to the active site in subunit 1, a binuclear center (BNC) formed by heme A3 and copper B (CU(B)). The BNC reduces molecular oxygen to 2 water molecules using 4 electrons from cytochrome c in the IMS and 4 protons from the mitochondrial matrix. This Lemniscomys barbarus (Barbary striped grass mouse) protein is Cytochrome c oxidase subunit 2 (MT-CO2).